A 439-amino-acid chain; its full sequence is MDICSRNKKLTIRRPAILVALALLLCSCKSTPPESMVTPPAGSKPPATTQQSSQPMRGIWLATVSRLDWPPVSSVNISNPTSRARVQQQAMIDKLDHLQRLGINTVFFQVKPDGTALWPSKILPWSDLMTGKIGENPGYDPLQFMLDEAHKRGMKVHAWFNPYRVSVNTKPGTIRELNSTLSQQPASVYVQHRDWIRTSGDRFVLDPGIPEVQDWITSIVAEVVSRYPVDGVQFDDYFYTESPGSRLNDNETYRKYGGAFASKADWRRNNTQQLIAKVSHTIKSIKPGVEFGVSPAGVWRNRSHDPLGSDTRGAAAYDESYADTRRWVEQGLLDYIAPQIYWPFSRSAARYDVLAKWWADVVKPTRTRLYIGIAFYKVGEPSKIEPDWMINGGVPELKKQLDLNDAVPEISGTILFREDYLNKPQTQQAVSYLQSRWGS.

Positions 1 to 27 (MDICSRNKKLTIRRPAILVALALLLCS) are cleaved as a signal peptide. Residue cysteine 28 is the site of N-palmitoyl cysteine attachment. Residue cysteine 28 is the site of S-diacylglycerol cysteine attachment. Residues 34–54 (ESMVTPPAGSKPPATTQQSSQ) are disordered.

The protein belongs to the glycosyl hydrolase-like 10 (GHL10) family.

It is found in the cell outer membrane. In terms of biological role, divisome-localized glycosyl hydrolase that cleaves peptide-free (denuded) peptidoglycans. This Escherichia coli O157:H7 protein is Glycosyl hydrolase DigH.